The sequence spans 411 residues: 3-phosphoshikimate 1-carboxyvinyltransferase (411 aa).

3-phosphoshikimate contacts are provided by Lys20, Ser21, and Arg25. Residue Lys20 coordinates phosphoenolpyruvate. Phosphoenolpyruvate-binding residues include Gly86 and Arg114. 3-phosphoshikimate is bound by residues Ser156, Ser157, Gln158, Ser181, Asp295, and Lys322. Gln158 serves as a coordination point for phosphoenolpyruvate. Residue Asp295 is the Proton acceptor of the active site. Arg326, Arg367, and Lys393 together coordinate phosphoenolpyruvate.

It belongs to the EPSP synthase family. In terms of assembly, monomer.

It is found in the cytoplasm. It carries out the reaction 3-phosphoshikimate + phosphoenolpyruvate = 5-O-(1-carboxyvinyl)-3-phosphoshikimate + phosphate. It participates in metabolic intermediate biosynthesis; chorismate biosynthesis. Its function is as follows. Catalyzes the transfer of the enolpyruvyl moiety of phosphoenolpyruvate (PEP) to the 5-hydroxyl of shikimate-3-phosphate (S3P) to produce enolpyruvyl shikimate-3-phosphate and inorganic phosphate. The chain is 3-phosphoshikimate 1-carboxyvinyltransferase from Picrophilus torridus (strain ATCC 700027 / DSM 9790 / JCM 10055 / NBRC 100828 / KAW 2/3).